Reading from the N-terminus, the 451-residue chain is Glycine--tRNA ligase (451 aa).

2 residues coordinate substrate: Arg-101 and Glu-151. ATP is bound by residues 183 to 185 (RNE), 193 to 198 (FRTCEF), 267 to 268 (EL), and 312 to 315 (GLTR). Position 198–202 (198–202 (FEQME)) interacts with substrate. 308–312 (ETSAG) provides a ligand contact to substrate.

This sequence belongs to the class-II aminoacyl-tRNA synthetase family. Homodimer.

The protein resides in the cytoplasm. The catalysed reaction is tRNA(Gly) + glycine + ATP = glycyl-tRNA(Gly) + AMP + diphosphate. Its function is as follows. Catalyzes the attachment of glycine to tRNA(Gly). This chain is Glycine--tRNA ligase, found in Treponema denticola (strain ATCC 35405 / DSM 14222 / CIP 103919 / JCM 8153 / KCTC 15104).